Consider the following 329-residue polypeptide: MKFGSIVLIAAAAGSAVAAPAKRASVFQWFGSNESGAEFGQNTIPGSYGKEFIFPDPSTISTLIGKGMNIFRVQFLMERLVPSSMTGSYNEEYLANLTSVVDAVTKAGSYAILDPHNFGRYNGQIISSTDDFKTFWQNLAGKFKSNNLVIFDTNNEYHDMDQALVLNLNQAAINGIRAAGATSQYIFVEGNSWSGAWTWVDVNDNLKALTDPQDKIVYEMHQYLDSDGSGTSESCVSTTIGKERVTAATKWLKDNGKVGIIGEFAGGVNDQCRTAISGMLEYLAQNTDVWKGALWWAAGPWWGNYMFNMEPPSGAAYVGMLDILEPYLG.

Residues 1 to 18 (MKFGSIVLIAAAAGSAVA) form the signal peptide. N-linked (GlcNAc...) asparagine glycosylation is found at N33 and N96. E156 serves as the catalytic Proton donor. The active-site Nucleophile is the E263.

Belongs to the glycosyl hydrolase 5 (cellulase A) family.

The protein localises to the secreted. It carries out the reaction Endohydrolysis of (1-&gt;4)-beta-D-glucosidic linkages in cellulose, lichenin and cereal beta-D-glucans.. Has endoglucanase activity on substrates containing beta-1,4 glycosidic bonds, like in carboxymethylcellulose (CMC), hydroxyethylcellulose (HEC) and beta-glucan. Involved in the degradation of complex natural cellulosic substrates. This chain is Probable endo-beta-1,4-glucanase B (eglB), found in Neosartorya fischeri (strain ATCC 1020 / DSM 3700 / CBS 544.65 / FGSC A1164 / JCM 1740 / NRRL 181 / WB 181) (Aspergillus fischerianus).